The sequence spans 431 residues: Serine--tRNA ligase (431 aa).

237–239 is an L-serine binding site; the sequence is TAE. ATP is bound at residue 268–270; it reads RSE. E291 contributes to the L-serine binding site. 355-358 is an ATP binding site; that stretch reads EISS. S390 is an L-serine binding site.

This sequence belongs to the class-II aminoacyl-tRNA synthetase family. Type-1 seryl-tRNA synthetase subfamily. Homodimer. The tRNA molecule binds across the dimer.

It is found in the cytoplasm. It carries out the reaction tRNA(Ser) + L-serine + ATP = L-seryl-tRNA(Ser) + AMP + diphosphate + H(+). It catalyses the reaction tRNA(Sec) + L-serine + ATP = L-seryl-tRNA(Sec) + AMP + diphosphate + H(+). The protein operates within aminoacyl-tRNA biosynthesis; selenocysteinyl-tRNA(Sec) biosynthesis; L-seryl-tRNA(Sec) from L-serine and tRNA(Sec): step 1/1. Catalyzes the attachment of serine to tRNA(Ser). Is also able to aminoacylate tRNA(Sec) with serine, to form the misacylated tRNA L-seryl-tRNA(Sec), which will be further converted into selenocysteinyl-tRNA(Sec). The sequence is that of Serine--tRNA ligase from Neisseria gonorrhoeae (strain ATCC 700825 / FA 1090).